The sequence spans 498 residues: 3-octaprenyl-4-hydroxybenzoate carboxy-lyase (498 aa).

N175 is a Mn(2+) binding site. Prenylated FMN contacts are provided by residues 178 to 180, 192 to 194, and 197 to 198; these read IYR, RWL, and RG. Mn(2+) is bound at residue E241. D290 serves as the catalytic Proton donor.

The protein belongs to the UbiD family. As to quaternary structure, homohexamer. The cofactor is prenylated FMN. Mn(2+) serves as cofactor.

The protein localises to the cell membrane. It carries out the reaction a 4-hydroxy-3-(all-trans-polyprenyl)benzoate + H(+) = a 2-(all-trans-polyprenyl)phenol + CO2. It functions in the pathway cofactor biosynthesis; ubiquinone biosynthesis. In terms of biological role, catalyzes the decarboxylation of 3-octaprenyl-4-hydroxy benzoate to 2-octaprenylphenol, an intermediate step in ubiquinone biosynthesis. This is 3-octaprenyl-4-hydroxybenzoate carboxy-lyase from Yersinia pseudotuberculosis serotype I (strain IP32953).